Here is a 142-residue protein sequence, read N- to C-terminus: Large-conductance mechanosensitive channel (142 aa).

Helical transmembrane passes span phenylalanine 10–glycine 30, leucine 40–valine 60, and glycine 86–valine 106.

Belongs to the MscL family. Homopentamer.

It localises to the cell inner membrane. Its function is as follows. Channel that opens in response to stretch forces in the membrane lipid bilayer. May participate in the regulation of osmotic pressure changes within the cell. This is Large-conductance mechanosensitive channel from Acidovorax ebreus (strain TPSY) (Diaphorobacter sp. (strain TPSY)).